A 141-amino-acid polypeptide reads, in one-letter code: ATP synthase epsilon chain (141 aa).

Belongs to the ATPase epsilon chain family. F-type ATPases have 2 components, CF(1) - the catalytic core - and CF(0) - the membrane proton channel. CF(1) has five subunits: alpha(3), beta(3), gamma(1), delta(1), epsilon(1). CF(0) has three main subunits: a, b and c.

The protein resides in the cell inner membrane. Functionally, produces ATP from ADP in the presence of a proton gradient across the membrane. The protein is ATP synthase epsilon chain of Bordetella avium (strain 197N).